The primary structure comprises 403 residues: Phosphopentomutase (403 aa).

Residues Asp-13, Asp-298, His-303, Asp-339, His-340, and His-351 each coordinate Mn(2+).

The protein belongs to the phosphopentomutase family. Mn(2+) is required as a cofactor.

It localises to the cytoplasm. The enzyme catalyses 2-deoxy-alpha-D-ribose 1-phosphate = 2-deoxy-D-ribose 5-phosphate. It carries out the reaction alpha-D-ribose 1-phosphate = D-ribose 5-phosphate. Its pathway is carbohydrate degradation; 2-deoxy-D-ribose 1-phosphate degradation; D-glyceraldehyde 3-phosphate and acetaldehyde from 2-deoxy-alpha-D-ribose 1-phosphate: step 1/2. Functionally, isomerase that catalyzes the conversion of deoxy-ribose 1-phosphate (dRib-1-P) and ribose 1-phosphate (Rib-1-P) to deoxy-ribose 5-phosphate (dRib-5-P) and ribose 5-phosphate (Rib-5-P), respectively. This chain is Phosphopentomutase, found in Streptococcus thermophilus.